A 231-amino-acid polypeptide reads, in one-letter code: AA9 family lytic polysaccharide monooxygenase F (231 aa).

An N-terminal signal peptide occupies residues 1-17 (MLPSISLLLAAALGTSA). Cu(2+)-binding residues include H18, D50, and H89. D50 contacts O2. Cystine bridges form between C59–C177 and C147–C231. H163 and Q172 together coordinate O2. A Cu(2+)-binding site is contributed by Y174.

The protein belongs to the polysaccharide monooxygenase AA9 family. Cu(2+) is required as a cofactor.

The protein resides in the secreted. The catalysed reaction is [(1-&gt;4)-beta-D-glucosyl]n+m + reduced acceptor + O2 = 4-dehydro-beta-D-glucosyl-[(1-&gt;4)-beta-D-glucosyl]n-1 + [(1-&gt;4)-beta-D-glucosyl]m + acceptor + H2O.. Its function is as follows. Lytic polysaccharide monooxygenase (LPMO) that depolymerizes crystalline and amorphous polysaccharides via the oxidation of scissile alpha- or beta-(1-4)-glycosidic bonds, yielding C1 oxidation products. Catalysis by LPMOs requires the reduction of the active-site copper from Cu(II) to Cu(I) by a reducing agent and H(2)O(2) or O(2) as a cosubstrate. The protein is AA9 family lytic polysaccharide monooxygenase F (gh61-6) of Neurospora crassa (strain ATCC 24698 / 74-OR23-1A / CBS 708.71 / DSM 1257 / FGSC 987).